The chain runs to 679 residues: G-protein-signaling modulator 2 (679 aa).

The tract at residues 22–357 (ASCLELALEG…HLEISREVGD (336 aa)) is important for interaction with NUMA1; INSC and FRMPD1. 8 TPR repeats span residues 24–57 (CLELALEGERLCKSGDCRAGVSFFEAAVQVGTED), 62–95 (SAIYSQLGNAYFYLHDYAKALEYHHHDLTLARTI), 102–135 (AKASGNLGNTLKVLGNFDEAIVCCQRHLDISREL), 142–184 (ARAL…AVDL), 202–235 (GRAFGNLGNTHYLLGNFRDAVIAHEQRLLIAKEF), 242–275 (RRAYSNLGNAYIFLGEFETASEYYKKTLLLARQL), 282–315 (AQSCYSLGNTYTLLQDYEKAIDYHLKHLAIAQEL), and 322–355 (GRACWSLGNAYTALGNHDQAMHFAEKHLEISREV). Residues S408 and S484 each carry the phosphoserine modification. T487 is subject to Phosphothreonine. Residues 490-512 (DEGFFDLLRRFQSNRMDDQRCHL) form the GoLoco 1 domain. Phosphoserine is present on residues S540 and S564. 3 consecutive GoLoco domains span residues 543 to 565 (TDEFLDLLASSQSRRLDDQRASF), 594 to 616 (DEDFFDILVKCQGSRLDDQRCAP), and 628 to 650 (DEDFFSLILRSQAKRMDEQRVLL). R608, R613, R642, and R647 together coordinate GDP.

This sequence belongs to the GPSM family. In terms of assembly, interacts with the dynein-dynactin complex; this interaction is inhibited in a PLK1-dependent manner. Part of a spindle orientation complex at least composed of GNAI1, GPSM2 and NUMA1. Interacts with LLGL2. Interacts (via TPR repeat region) with INSC/inscuteable. Interacts (via TPR repeat region) with NUMA1 (via C-terminus); this interaction is direct, inhibited in a PLK1-dependent manner and promotes spindle pole organization. INSC and NUMA1 compete for the same binding site, but INSC has higher affinity and can displace NUMA1 (in vitro). Interacts with GNAI2. Interacts (via GoLoco domains) with the GDP-bound form of GNAI1 and GNAI3; has much lower affinity for the GTP-bound form. Interaction with GDP-bound GNAI3 strongly enhances the affinity for NUMA1. Interacts (via TPR repeat region) with FRMPD1. INSC and FRMPD1 compete for the same binding site, but INSC has higher affinity and can displace FRMPD1 (in vitro). Interacts (via TPR repeat region) with FRMPD4. Identified in a complex with INSC and F2RL2/Par3. Interacts with TASOR. In terms of tissue distribution, detected in brain and liver (at protein level). Detected in brain, spleen, liver and testis, and at lower levels in heart, lung and kidney. Enriched in the ventricular zone of the developing central nervous systems. Expressed in proximal colon, ileum, ovary, Sertoli cells of the testis and granular cells within the cerebellum.

The protein resides in the cytoplasm. Its subcellular location is the cell cortex. It localises to the cytoskeleton. It is found in the spindle pole. The protein localises to the lateral cell membrane. In terms of biological role, plays an important role in mitotic spindle pole organization via its interaction with NUMA1. Required for cortical dynein-dynactin complex recruitment during metaphase. Plays a role in metaphase spindle orientation. Plays an important role in asymmetric cell divisions. Has guanine nucleotide dissociation inhibitor (GDI) activity towards G(i) alpha proteins, such as GNAI1 and GNAI3, and thereby regulates their activity. This chain is G-protein-signaling modulator 2 (Gpsm2), found in Mus musculus (Mouse).